Reading from the N-terminus, the 92-residue chain is Large ribosomal subunit protein eL37 (92 aa).

The Zn(2+) site is built by cysteine 19, cysteine 22, cysteine 34, and cysteine 37. The C4-type zinc-finger motif lies at cysteine 19–cysteine 37. The interval serine 50–histidine 92 is disordered.

This sequence belongs to the eukaryotic ribosomal protein eL37 family. Zn(2+) is required as a cofactor.

In terms of biological role, binds to the 23S rRNA. The polypeptide is Large ribosomal subunit protein eL37 (rpl37) (Emericella nidulans (strain FGSC A4 / ATCC 38163 / CBS 112.46 / NRRL 194 / M139) (Aspergillus nidulans)).